A 150-amino-acid chain; its full sequence is Cell division protein SepF (150 aa).

The segment at 26–45 (DREEIPEEHESKDRTAYQSK) is disordered.

It belongs to the SepF family. Homodimer. Interacts with FtsZ.

It localises to the cytoplasm. Functionally, cell division protein that is part of the divisome complex and is recruited early to the Z-ring. Probably stimulates Z-ring formation, perhaps through the cross-linking of FtsZ protofilaments. Its function overlaps with FtsA. The chain is Cell division protein SepF from Bacillus licheniformis (strain ATCC 14580 / DSM 13 / JCM 2505 / CCUG 7422 / NBRC 12200 / NCIMB 9375 / NCTC 10341 / NRRL NRS-1264 / Gibson 46).